The chain runs to 121 residues: Flagellar protein FliT (121 aa).

Positions 1–50 (MNHAPHLYFAWQQLVEKSQLMLRLATEEQWDELIASEMAYVNAVQEIAHL) are required for homodimerization. The tract at residues 60-98 (MQEQLRPMLRLILDNESKVKQLLQIRMDELAKLVGQSSV) is fliD binding.

It belongs to the FliT family. As to quaternary structure, homodimer. Interacts with FliD and FlhC.

It localises to the cytoplasm. Its subcellular location is the cytosol. Dual-function protein that regulates the transcription of class 2 flagellar operons and that also acts as an export chaperone for the filament-capping protein FliD. As a transcriptional regulator, acts as an anti-FlhDC factor; it directly binds FlhC, thus inhibiting the binding of the FlhC/FlhD complex to class 2 promoters, resulting in decreased expression of class 2 flagellar operons. As a chaperone, effects FliD transition to the membrane by preventing its premature polymerization, and by directing it to the export apparatus. The protein is Flagellar protein FliT of Escherichia coli O157:H7.